A 292-amino-acid polypeptide reads, in one-letter code: Formamidopyrimidine-DNA glycosylase (292 aa).

Proline 2 acts as the Schiff-base intermediate with DNA in catalysis. Catalysis depends on glutamate 3, which acts as the Proton donor. The active-site Proton donor; for beta-elimination activity is the lysine 60. Residues histidine 109, arginine 128, and lysine 173 each contribute to the DNA site. The FPG-type zinc finger occupies asparagine 258–lysine 292. Arginine 282 serves as the catalytic Proton donor; for delta-elimination activity.

This sequence belongs to the FPG family. Monomer. Requires Zn(2+) as cofactor.

The enzyme catalyses Hydrolysis of DNA containing ring-opened 7-methylguanine residues, releasing 2,6-diamino-4-hydroxy-5-(N-methyl)formamidopyrimidine.. It catalyses the reaction 2'-deoxyribonucleotide-(2'-deoxyribose 5'-phosphate)-2'-deoxyribonucleotide-DNA = a 3'-end 2'-deoxyribonucleotide-(2,3-dehydro-2,3-deoxyribose 5'-phosphate)-DNA + a 5'-end 5'-phospho-2'-deoxyribonucleoside-DNA + H(+). In terms of biological role, involved in base excision repair of DNA damaged by oxidation or by mutagenic agents. Acts as a DNA glycosylase that recognizes and removes damaged bases. Has a preference for oxidized purines, such as 7,8-dihydro-8-oxoguanine (8-oxoG). Has AP (apurinic/apyrimidinic) lyase activity and introduces nicks in the DNA strand. Cleaves the DNA backbone by beta-delta elimination to generate a single-strand break at the site of the removed base with both 3'- and 5'-phosphates. This chain is Formamidopyrimidine-DNA glycosylase, found in Prochlorococcus marinus subsp. pastoris (strain CCMP1986 / NIES-2087 / MED4).